The primary structure comprises 240 residues: MTGKPAYKRVLLKASGEALMGSQGFGIDVSVADRIANDIKQARALGVEVGVVIGGGNIFRGVAVASKGGDRVTGDHMGMLATVINSLALRTSLHKIGVDSVVLSAIAMPEICESFSQRQATAYMDEGKVVIFAGGTGNPFFTTDSAAALRAAEIEADALLKGTQVDGIYSADPKKDPGATRFEQLTHEEVLDRGLAVMDTAAVALARENNILIIVYSIHENGGLADILQGKGRCTIVSDN.

13–16 (KASG) is a binding site for ATP. Positions 21 to 26 (GSQGFG) are involved in allosteric activation by GTP. Position 55 (Gly55) interacts with UMP. 2 residues coordinate ATP: Gly56 and Arg60. Residues Asp75 and 136-143 (TGNPFFTT) each bind UMP. Thr163, Gln164, Tyr169, and Asp172 together coordinate ATP.

This sequence belongs to the UMP kinase family. Homohexamer.

The protein resides in the cytoplasm. It catalyses the reaction UMP + ATP = UDP + ADP. It functions in the pathway pyrimidine metabolism; CTP biosynthesis via de novo pathway; UDP from UMP (UMPK route): step 1/1. Its activity is regulated as follows. Allosterically activated by GTP. Inhibited by UTP. Functionally, catalyzes the reversible phosphorylation of UMP to UDP. In Brucella melitensis biotype 1 (strain ATCC 23456 / CCUG 17765 / NCTC 10094 / 16M), this protein is Uridylate kinase.